The primary structure comprises 381 residues: Queuine tRNA-ribosyltransferase (381 aa).

The active-site Proton acceptor is the aspartate 89. Substrate contacts are provided by residues 89–93 (DSGGF), aspartate 143, glutamine 187, and glycine 214. An RNA binding region spans residues 245 to 251 (GVGKPED). Aspartate 264 functions as the Nucleophile in the catalytic mechanism. The segment at 269 to 273 (TRNAR) is RNA binding; important for wobble base 34 recognition. 4 residues coordinate Zn(2+): cysteine 302, cysteine 304, cysteine 307, and histidine 333.

It belongs to the queuine tRNA-ribosyltransferase family. In terms of assembly, homodimer. Within each dimer, one monomer is responsible for RNA recognition and catalysis, while the other monomer binds to the replacement base PreQ1. Requires Zn(2+) as cofactor.

It catalyses the reaction 7-aminomethyl-7-carbaguanine + guanosine(34) in tRNA = 7-aminomethyl-7-carbaguanosine(34) in tRNA + guanine. The protein operates within tRNA modification; tRNA-queuosine biosynthesis. In terms of biological role, catalyzes the base-exchange of a guanine (G) residue with the queuine precursor 7-aminomethyl-7-deazaguanine (PreQ1) at position 34 (anticodon wobble position) in tRNAs with GU(N) anticodons (tRNA-Asp, -Asn, -His and -Tyr). Catalysis occurs through a double-displacement mechanism. The nucleophile active site attacks the C1' of nucleotide 34 to detach the guanine base from the RNA, forming a covalent enzyme-RNA intermediate. The proton acceptor active site deprotonates the incoming PreQ1, allowing a nucleophilic attack on the C1' of the ribose to form the product. After dissociation, two additional enzymatic reactions on the tRNA convert PreQ1 to queuine (Q), resulting in the hypermodified nucleoside queuosine (7-(((4,5-cis-dihydroxy-2-cyclopenten-1-yl)amino)methyl)-7-deazaguanosine). In Pectobacterium carotovorum subsp. carotovorum (strain PC1), this protein is Queuine tRNA-ribosyltransferase.